The chain runs to 1039 residues: Probable inorganic carbon transporter subunit DabA 1 (1039 aa).

Residues C462, D464, H721, and C736 each coordinate Zn(2+).

This sequence belongs to the inorganic carbon transporter (TC 9.A.2) DabA family. Forms a complex with DabB. It depends on Zn(2+) as a cofactor.

The protein localises to the cell inner membrane. Functionally, part of an energy-coupled inorganic carbon pump. This is Probable inorganic carbon transporter subunit DabA 1 from Nitrobacter hamburgensis (strain DSM 10229 / NCIMB 13809 / X14).